Here is a 179-residue protein sequence, read N- to C-terminus: IMPACT family member in pol 5'region (179 aa).

This sequence belongs to the IMPACT family.

This is IMPACT family member in pol 5'region from Thermus thermophilus.